The sequence spans 114 residues: UPF0145 protein TTHA1944 (114 aa).

Belongs to the UPF0145 family.

The polypeptide is UPF0145 protein TTHA1944 (Thermus thermophilus (strain ATCC 27634 / DSM 579 / HB8)).